The chain runs to 587 residues: Cyclic di-GMP phosphodiesterase PA2567 (587 aa).

The GAF domain occupies 28–157 (DEVFEEILAA…LEHFARLVMA (130 aa)). Positions 192-327 (GALTVIAADL…GVGWARYNPP (136 aa)) constitute a GGDEF domain. In terms of domain architecture, EAL spans 335 to 587 (AFTLLTSLSQ…PEQLEDWLRR (253 aa)).

The catalysed reaction is 3',3'-c-di-GMP + H2O = 5'-phosphoguanylyl(3'-&gt;5')guanosine + H(+). In terms of biological role, phosphodiesterase (PDE) that catalyzes the hydrolysis of cyclic diguanylate (c-di-GMP) to 5'-pGpG. The polypeptide is Cyclic di-GMP phosphodiesterase PA2567 (Pseudomonas aeruginosa (strain ATCC 15692 / DSM 22644 / CIP 104116 / JCM 14847 / LMG 12228 / 1C / PRS 101 / PAO1)).